The chain runs to 435 residues: Glutamate-1-semialdehyde 2,1-aminomutase (435 aa).

K266 carries the post-translational modification N6-(pyridoxal phosphate)lysine.

It belongs to the class-III pyridoxal-phosphate-dependent aminotransferase family. HemL subfamily. As to quaternary structure, homodimer. It depends on pyridoxal 5'-phosphate as a cofactor.

The protein localises to the cytoplasm. The catalysed reaction is (S)-4-amino-5-oxopentanoate = 5-aminolevulinate. The protein operates within porphyrin-containing compound metabolism; protoporphyrin-IX biosynthesis; 5-aminolevulinate from L-glutamyl-tRNA(Glu): step 2/2. This Coxiella burnetii (strain CbuG_Q212) (Coxiella burnetii (strain Q212)) protein is Glutamate-1-semialdehyde 2,1-aminomutase.